Here is a 630-residue protein sequence, read N- to C-terminus: Altered inheritance of mitochondria protein 9, mitochondrial (630 aa).

The N-terminal 40 residues, 1 to 40 (MLKLTSRVGPKRLSSGLKSSSFKVNATIISKKFQSSLNSK), are a transit peptide targeting the mitochondrion.

It belongs to the AIM9 family.

Its subcellular location is the mitochondrion. In Debaryomyces hansenii (strain ATCC 36239 / CBS 767 / BCRC 21394 / JCM 1990 / NBRC 0083 / IGC 2968) (Yeast), this protein is Altered inheritance of mitochondria protein 9, mitochondrial (AIM9).